The primary structure comprises 489 residues: Argininosuccinate lyase (489 aa).

The tract at residues 1-20 (MSEPSAAVGQRPGGESAPAH) is disordered.

Belongs to the lyase 1 family. Argininosuccinate lyase subfamily.

The protein localises to the cytoplasm. It carries out the reaction 2-(N(omega)-L-arginino)succinate = fumarate + L-arginine. It participates in amino-acid biosynthesis; L-arginine biosynthesis; L-arginine from L-ornithine and carbamoyl phosphate: step 3/3. This is Argininosuccinate lyase from Acidothermus cellulolyticus (strain ATCC 43068 / DSM 8971 / 11B).